The primary structure comprises 314 residues: Inactive protein FRIGIDA (314 aa).

Residues 1–18 (MSNYPPTVAAQPTTTANP) are compositionally biased toward low complexity. Residues 1–31 (MSNYPPTVAAQPTTTANPLLQRHQSEQRRRE) are disordered. Residues 67-97 (VAVETFKRQFDDLQKHIESIENAIDSKLESN) are a coiled coil.

This sequence belongs to the Frigida family.

It localises to the nucleus. This Arabidopsis thaliana (Mouse-ear cress) protein is Inactive protein FRIGIDA (FRI).